A 69-amino-acid chain; its full sequence is Disintegrin VLO5B (69 aa).

Residues 1 to 66 (MNSANPCCDP…DCPRNPWKSE (66 aa)) form the Disintegrin domain. 4 disulfides stabilise this stretch: C7–C30, C21–C27, C26–C51, and C39–C58. The Cell attachment site; atypical (MLD) signature appears at 43–45 (MLD).

This sequence belongs to the disintegrin family. Dimeric disintegrin subfamily. As to quaternary structure, heterodimer with VLO5A; disulfide-linked. In terms of tissue distribution, expressed by the venom gland.

The protein resides in the secreted. Functionally, poor inhibitor of platelet aggregation. The disintegrin inhibits the adhesion of the alpha-4/beta-1 (ITGA4/ITGB1) integrin to VCAM-1. Inhibition on alpha-2b/beta-3 (ITGA2B/ITGB3) is low. The protein is Disintegrin VLO5B of Macrovipera lebetina obtusa (Levant blunt-nosed viper).